A 406-amino-acid polypeptide reads, in one-letter code: Olfactomedin-like protein 3 (406 aa).

The signal sequence occupies residues 1–21 (MGPHTQLLILLLLSWLGPLQG). A coiled-coil region spans residues 22–101 (QQHHLVEYME…REVDYLETQN (80 aa)). The 268-residue stretch at 134 to 401 (DCGYTISQVR…QIVYKLEMRK (268 aa)) folds into the Olfactomedin-like domain. Residues Cys135 and Cys328 are joined by a disulfide bond. Asn248 is a glycosylation site (N-linked (GlcNAc...) asparagine).

The protein belongs to the OLFML3 family.

The protein resides in the secreted. Its function is as follows. Secreted scaffold protein that plays an essential role in dorsoventral patterning during early development. Stabilizes axial formation by restricting chordin (CHRD) activity on the dorsal side. Acts by facilitating the association between the tolloid proteases and their substrate chordin (CHRD), leading to enhance chordin (CHRD) degradation. May have matrix-related function involved in placental and embryonic development, or play a similar role in other physiological processes. The sequence is that of Olfactomedin-like protein 3 (OLFML3) from Bos taurus (Bovine).